Consider the following 284-residue polypeptide: GPN-loop GTPase 3 (284 aa).

13–18 (GSGKST) is a GTP binding site. A Gly-Pro-Asn (GPN)-loop; involved in dimer interface motif is present at residues 72-74 (GPN). 174-177 (TKMD) is a binding site for GTP. Positions 262–284 (EPREHEEESSSMFDEYFQERQNE) are disordered.

This sequence belongs to the GPN-loop GTPase family. In terms of assembly, heterodimer with GPN1. Binds to RNA polymerase II (RNAPII). Interacts directly with subunits RPB4 and RPB7 and the CTD of RPB1.

Small GTPase required for proper localization of RNA polymerase II (RNAPII). May act at an RNAP assembly step prior to nuclear import. The sequence is that of GPN-loop GTPase 3 from Mus musculus (Mouse).